The primary structure comprises 729 residues: Neurochondrin (729 aa).

Ser-2 carries the post-translational modification N-acetylserine. Ser-2 is subject to Phosphoserine. S-palmitoyl cysteine attachment occurs at residues Cys-3 and Cys-4. Asymmetric dimethylarginine is present on Arg-75. Ser-448 carries the phosphoserine modification.

The protein belongs to the neurochondrin family. In terms of assembly, interacts with MCHR1. Interacts with SEMA4C. Interacts with DIAPH1 (via FH3 domain). Interacts with GRM5. Palmitoylated. Palmitoylation by ZDHHC1, ZDHHC3 and ZDHHC11 regulates the association of NCDN with endosome membranes. May also be palmitoylated by ZDHHC7. As to expression, expressed in brain and in peripheral nervous system (at protein level). Weakly expressed in neurites.

It localises to the cytoplasm. The protein localises to the cytosol. It is found in the endosome membrane. Its subcellular location is the cell projection. The protein resides in the dendrite. It localises to the postsynapse. Its function is as follows. Probably involved in signal transduction, in the nervous system, via increasing cell surface localization of GRM5 and positively regulating its signaling. Required for the spatial learning process. Acts as a negative regulator of Ca(2+)-calmodulin-dependent protein kinase 2 (CaMK2) phosphorylation. May play a role in modulating melanin-concentrating hormone-mediated functions via its interaction with MCHR1 that interferes with G protein-coupled signal transduction. May be involved in bone metabolism. May also be involved in neurite outgrowth. This Rattus norvegicus (Rat) protein is Neurochondrin (Ncdn).